A 102-amino-acid chain; its full sequence is MRKYEALLLLSPELATDNRQEIVENLKGVLERQGTTMLSVDEWGMKDLAYPVQKKTRGHYTRFEFAAPATAIAEFERIVRITDGVMKFITVKLADKYVPEGA.

Belongs to the bacterial ribosomal protein bS6 family.

In terms of biological role, binds together with bS18 to 16S ribosomal RNA. The chain is Small ribosomal subunit protein bS6 from Solidesulfovibrio magneticus (strain ATCC 700980 / DSM 13731 / RS-1) (Desulfovibrio magneticus).